The primary structure comprises 643 residues: Threonine--tRNA ligase (643 aa).

A TGS domain is found at 1–62; the sequence is MSFSVTLPDG…DEDVEAAIIT (62 aa). The tract at residues 239–537 is catalytic; the sequence is DHRTIGRDLD…LTEIYKGAFP (299 aa). Zn(2+) contacts are provided by C333, H384, and H514.

Belongs to the class-II aminoacyl-tRNA synthetase family. Homodimer. Zn(2+) serves as cofactor.

It is found in the cytoplasm. The enzyme catalyses tRNA(Thr) + L-threonine + ATP = L-threonyl-tRNA(Thr) + AMP + diphosphate + H(+). Catalyzes the attachment of threonine to tRNA(Thr) in a two-step reaction: L-threonine is first activated by ATP to form Thr-AMP and then transferred to the acceptor end of tRNA(Thr). Also edits incorrectly charged L-seryl-tRNA(Thr). The chain is Threonine--tRNA ligase from Lactobacillus gasseri (strain ATCC 33323 / DSM 20243 / BCRC 14619 / CIP 102991 / JCM 1131 / KCTC 3163 / NCIMB 11718 / NCTC 13722 / AM63).